A 941-amino-acid polypeptide reads, in one-letter code: Coiled-coil and C2 domain-containing protein 1A (941 aa).

Position 91 is a phosphothreonine (threonine 91). Disordered regions lie at residues threonine 183 to proline 248 and serine 301 to proline 336. A compositionally biased stretch (polar residues) spans alanine 228–proline 239. Residue serine 247 is modified to Phosphoserine. Residues leucine 303–alanine 318 are compositionally biased toward pro residues. Positions lysine 338–histidine 384 form a coiled coil. Residues alanine 428–glutamine 482 are disordered. Residue serine 434 is modified to Phosphoserine. Residues alanine 467–glycine 476 show a composition bias toward low complexity. A coiled-coil region spans residues lysine 475 to valine 508. In terms of domain architecture, C2 spans arginine 628–leucine 762.

The protein belongs to the CC2D1 family. As to expression, strongly expressed in several brain areas including frontal cortex, cortex, mesencephalon, hippocampus, midbrain and hypothalamus. Also expressed in testis and at low levels in pituitary, liver and kidney. In brain the highest levels are detected in hippocampal pyramidal cells and raphe nuclei.

Its subcellular location is the cytoplasm. The protein localises to the nucleus. It is found in the cytoskeleton. It localises to the microtubule organizing center. The protein resides in the centrosome. In terms of biological role, transcription factor that binds specifically to the DRE (dual repressor element) and represses 5-HT1A gene transcription though this element. Mediates HDAC-independent repression of HTR1A promoter. CAMK2G inhibits CC2D1a-induced repression of the HTR1A. May play a role in the altered regulation of 5-HT1A receptors associated with anxiety and major depression. Performs essential function in controlling functional maturation of synapses. This Rattus norvegicus (Rat) protein is Coiled-coil and C2 domain-containing protein 1A (Cc2d1a).